The primary structure comprises 66 residues: Large ribosomal subunit protein uL29 (66 aa).

The protein belongs to the universal ribosomal protein uL29 family.

The protein is Large ribosomal subunit protein uL29 of Thermosipho africanus (strain TCF52B).